The following is a 248-amino-acid chain: tRNA uridine(34) hydroxylase (248 aa).

Residues 127–221 enclose the Rhodanese domain; sequence RGRPLVLLDT…YFEEVGGEGY (95 aa). Cysteine 181 acts as the Cysteine persulfide intermediate in catalysis.

The protein belongs to the TrhO family.

It catalyses the reaction uridine(34) in tRNA + AH2 + O2 = 5-hydroxyuridine(34) in tRNA + A + H2O. In terms of biological role, catalyzes oxygen-dependent 5-hydroxyuridine (ho5U) modification at position 34 in tRNAs. The protein is tRNA uridine(34) hydroxylase of Xanthomonas axonopodis pv. citri (strain 306).